Consider the following 185-residue polypeptide: ATP-dependent protease subunit HslV (185 aa).

Thr12 is an active-site residue. Residues Ala168, Cys171, and Thr174 each coordinate Na(+).

The protein belongs to the peptidase T1B family. HslV subfamily. In terms of assembly, a double ring-shaped homohexamer of HslV is capped on each side by a ring-shaped HslU homohexamer. The assembly of the HslU/HslV complex is dependent on binding of ATP.

Its subcellular location is the cytoplasm. The catalysed reaction is ATP-dependent cleavage of peptide bonds with broad specificity.. With respect to regulation, allosterically activated by HslU binding. Functionally, protease subunit of a proteasome-like degradation complex believed to be a general protein degrading machinery. The chain is ATP-dependent protease subunit HslV from Cereibacter sphaeroides (strain KD131 / KCTC 12085) (Rhodobacter sphaeroides).